The chain runs to 374 residues: Putative zinc metalloprotease R01501 (374 aa).

H26 contacts Zn(2+). The active site involves E27. Residue H30 participates in Zn(2+) binding. The next 4 helical transmembrane spans lie at 36-55, 112-134, 301-323, and 348-367; these read WSGI…LFGW, AATV…AVLF, VLNF…VPVL, and LAFR…AAWN. Positions 126 to 199 constitute a PDZ domain; sequence AIAIFAVLFS…LPITVRIERE (74 aa).

It belongs to the peptidase M50B family. Requires Zn(2+) as cofactor.

It is found in the cell inner membrane. This chain is Putative zinc metalloprotease R01501, found in Rhizobium meliloti (strain 1021) (Ensifer meliloti).